Here is a 733-residue protein sequence, read N- to C-terminus: MEDPLIGRDSLGGGGTDRVRRSEAITHGTPFQKAAALVDLAEDGIGLPVEILDQSSFGESARYYFIFTRLDLIWSLNYFALLFLNFFEQPLWCEKNPKPSCKDRDYYYLGELPYLTNAESIIYEVITLAILLVHTFFPISYEGSRIFWTSRLNLVKVACVVILFVDVLVDFLYLSPLAFDFLPFRIAPYVRVIIFILSIRELRDTLVLLSGMLGTYLNILALWMLFLLFASWIAFVMFEDTQQGLTVFTSYGATLYQMFILFTTSNNPDVWIPAYKSSRWSSVFFVLYVLIGVYFVTNLILAVVYDSFKEQLAKQVSGMDQMKRRMLEKAFGLIDSDKNGEIDKNQCIKLFEQLTNYRTLPKISKEEFGLIFDELDDTRDFKINKDEFADLCQAIALRFQKEEVPSLFEHFPQIYHSALSQQLRAFVRSPNFGYAISFILIINFIAVVVETTLDIEESSAQKPWQVAEFVFGWIYVLEMALKIYTYGFENYWREGANRFDFLVTWVIVIGETATFITPDENTFFSNGEWIRYLLLARMLRLIRLLMNVQRYRAFIATFITLIPSLMPYLGTIFCVLCIYCSIGVQVFGGLVNAGNKKLFETELAEDDYLLFNFNDYPNGMVTLFNLLVMGNWQVWMESYKDLTGTWWSITYFVSFYVITILLLLNLVVAFVLEAFFTELDLEEEEKCQGQDSQEKRNRRRSAGSKSRSQRVDTLLHHMLGDELSKPECSTSDT.

Met1 carries the N-acetylmethionine modification. Topologically, residues 1 to 71 (MEDPLIGRDS…RYYFIFTRLD (71 aa)) are cytoplasmic. Residues 72 to 92 (LIWSLNYFALLFLNFFEQPLW) form a helical membrane-spanning segment. At 93–120 (CEKNPKPSCKDRDYYYLGELPYLTNAES) the chain is on the vacuolar side. The chain crosses the membrane as a helical span at residues 121–141 (IIYEVITLAILLVHTFFPISY). Residues 142 to 158 (EGSRIFWTSRLNLVKVA) are Cytoplasmic-facing. Residues 159–179 (CVVILFVDVLVDFLYLSPLAF) form a helical membrane-spanning segment. Residue Asp180 is a topological domain, vacuolar. A helical; Voltage-sensor transmembrane segment spans residues 181 to 199 (FLPFRIAPYVRVIIFILSI). Topologically, residues 200–218 (RELRDTLVLLSGMLGTYLN) are cytoplasmic. Residues 219–239 (ILALWMLFLLFASWIAFVMFE) traverse the membrane as a helical segment. At 240 to 245 (DTQQGL) the chain is on the vacuolar side. Positions 246–260 (TVFTSYGATLYQMFI) form an intramembrane region, pore-forming. Residues 261–282 (LFTTSNNPDVWIPAYKSSRWSS) are Vacuolar-facing. Residues 283–303 (VFFVLYVLIGVYFVTNLILAV) form a helical membrane-spanning segment. At 304 to 428 (VYDSFKEQLA…LSQQLRAFVR (125 aa)) the chain is on the cytoplasmic side. EF-hand domains lie at 322–357 (MKRRMLEKAFGLIDSDKNGEIDKNQCIKLFEQLTNY) and 363–398 (ISKEEFGLIFDELDDTRDFKINKDEFADLCQAIALR). Residues 429–449 (SPNFGYAISFILIINFIAVVV) traverse the membrane as a helical segment. Topologically, residues 450–465 (ETTLDIEESSAQKPWQ) are vacuolar. A helical transmembrane segment spans residues 466–486 (VAEFVFGWIYVLEMALKIYTY). Over 487–498 (GFENYWREGANR) the chain is Cytoplasmic. A helical transmembrane segment spans residues 499–519 (FDFLVTWVIVIGETATFITPD). The Vacuolar segment spans residues 520–528 (ENTFFSNGE). A helical; Voltage-sensor transmembrane segment spans residues 529–546 (WIRYLLLARMLRLIRLLM). At 547 to 557 (NVQRYRAFIAT) the chain is on the cytoplasmic side. Residues 558–578 (FITLIPSLMPYLGTIFCVLCI) traverse the membrane as a helical segment. The Vacuolar segment spans residues 579–615 (YCSIGVQVFGGLVNAGNKKLFETELAEDDYLLFNFND). An intramembrane region (pore-forming) is located at residues 616–630 (YPNGMVTLFNLLVMG). The Vacuolar portion of the chain corresponds to 631–651 (NWQVWMESYKDLTGTWWSITY). The chain crosses the membrane as a helical span at residues 652–672 (FVSFYVITILLLLNLVVAFVL). Topologically, residues 673–733 (EAFFTELDLE…SKPECSTSDT (61 aa)) are cytoplasmic. A compositionally biased stretch (basic and acidic residues) spans 686–695 (KCQGQDSQEK). A disordered region spans residues 686–711 (KCQGQDSQEKRNRRRSAGSKSRSQRV).

It belongs to the calcium channel alpha-1 subunit (TC 1.A.1.11) family. Two pore calcium channel subfamily. As to quaternary structure, homodimer. In terms of tissue distribution, ubiquitously expressed.

Its subcellular location is the vacuole membrane. Inhibited by Al(3+). Functions as a voltage-gated inward-rectifying Ca(2+) channel (VDCC) across the vacuole membrane. Is one of the essential components of the slow vacuolar (SV) channel. Acts as the major ROS-responsive Ca(2+) channel and is the possible target of Al-dependent inhibition. Involved in the regulation of germination and stomatal movement. This Arabidopsis thaliana (Mouse-ear cress) protein is Two pore calcium channel protein 1 (TPC1).